An 82-amino-acid chain; its full sequence is MLSDEEREAFRQQAAAQQMSLSNWLRQAGLRQLEAQRQRPLRTAQELREFFASRPDETGAEPDWQAHLQVMAESRRRGLPAP.

Putative antitoxin component of a possible type II toxin-antitoxin (TA) system. The cognate toxin is VapC23. The sequence is that of Putative antitoxin VapB23 (vapB23) from Mycobacterium tuberculosis (strain ATCC 25618 / H37Rv).